Here is a 141-residue protein sequence, read N- to C-terminus: Single-stranded DNA-binding protein 2 (141 aa).

Positions 1 to 104 (MLNRTVLVGR…VVADSVQFLE (104 aa)) constitute an SSB domain. The disordered stretch occupies residues 104–141 (EPKNNNQQQNNNYQQQRQTQTGNNPFDNNADSIEDLPF). The span at 107-127 (NNNQQQNNNYQQQRQTQTGNN) shows a compositional bias: low complexity.

As to quaternary structure, homotetramer.

In Staphylococcus aureus (strain Mu50 / ATCC 700699), this protein is Single-stranded DNA-binding protein 2 (ssb-p).